The chain runs to 294 residues: 33 kDa chaperonin (294 aa).

Intrachain disulfides connect Cys239–Cys241 and Cys272–Cys275.

It belongs to the HSP33 family. Post-translationally, under oxidizing conditions two disulfide bonds are formed involving the reactive cysteines. Under reducing conditions zinc is bound to the reactive cysteines and the protein is inactive.

It is found in the cytoplasm. In terms of biological role, redox regulated molecular chaperone. Protects both thermally unfolding and oxidatively damaged proteins from irreversible aggregation. Plays an important role in the bacterial defense system toward oxidative stress. This chain is 33 kDa chaperonin, found in Listeria welshimeri serovar 6b (strain ATCC 35897 / DSM 20650 / CCUG 15529 / CIP 8149 / NCTC 11857 / SLCC 5334 / V8).